A 505-amino-acid polypeptide reads, in one-letter code: Alpha-internexin (505 aa).

Residues 1–87 are head; that stretch reads MSFGSEHYLC…SQAAARTNEY (87 aa). The residue at position 72 (Ser72) is a Phosphoserine. Residues 88-129 are coil 1A; it reads KIIRTNEKEQLQGLNDRFAVFIEKVHQLETQNRALEAELAAL. One can recognise an IF rod domain in the interval 94–407; sequence EKEQLQGLND…KLLEGEETRF (314 aa). The segment at 130-142 is linker 1; it reads RQRHAEPSRVGEL. Positions 143-238 are coil 1B; sequence FQRELRELRA…QVHDEEVAEL (96 aa). A Phosphoserine modification is found at Ser219. The interval 239–262 is linker 2; that stretch reads LATLQASSQAAAEVDVAVAKPDLT. The segment at 263-408 is coil 2; the sequence is SALREIRAQY…LLEGEETRFS (146 aa). Position 290 is an N6-acetyllysine (Lys290). Phosphoserine is present on residues Ser335, Ser474, and Ser502. The tail stretch occupies residues 409–505; it reads TSGLSISGLN…EITTSSSQKM (97 aa). The disordered stretch occupies residues 438-505; sequence KVSSAGLSLK…EITTSSSQKM (68 aa). Residues 495-505 show a composition bias toward low complexity; sequence EEITTSSSQKM.

It belongs to the intermediate filament family. As to quaternary structure, forms homodimers (in vitro). Forms heterodimers with NEFL, NEFM or NEFH (in vitro). In terms of processing, O-glycosylated. In terms of tissue distribution, expressed in the dorsal root ganglion neurons (at protein level).

In terms of biological role, class-IV neuronal intermediate filament that is able to self-assemble. It is involved in the morphogenesis of neurons. It may form an independent structural network without the involvement of other neurofilaments or it may cooperate with NEFL to form the filamentous backbone to which NEFM and NEFH attach to form the cross-bridges. May also cooperate with the neuronal intermediate filament protein PRPH to form filamentous networks. This chain is Alpha-internexin (Ina), found in Rattus norvegicus (Rat).